The primary structure comprises 259 residues: Phosphatidate cytidylyltransferase (259 aa).

The next 7 helical transmembrane spans lie at leucine 31–isoleucine 51, proline 69–leucine 89, phenylalanine 103–isoleucine 123, tyrosine 129–glycine 149, phenylalanine 170–leucine 190, phenylalanine 193–isoleucine 213, and phenylalanine 236–asparagine 256.

Belongs to the CDS family.

The protein resides in the cell membrane. It carries out the reaction a 1,2-diacyl-sn-glycero-3-phosphate + CTP + H(+) = a CDP-1,2-diacyl-sn-glycerol + diphosphate. The protein operates within phospholipid metabolism; CDP-diacylglycerol biosynthesis; CDP-diacylglycerol from sn-glycerol 3-phosphate: step 3/3. This is Phosphatidate cytidylyltransferase (cdsA) from Aquifex aeolicus (strain VF5).